We begin with the raw amino-acid sequence, 305 residues long: UDP-3-O-acyl-N-acetylglucosamine deacetylase (305 aa).

Zn(2+)-binding residues include H78, H237, and D241. Catalysis depends on H264, which acts as the Proton donor.

This sequence belongs to the LpxC family. Requires Zn(2+) as cofactor.

It carries out the reaction a UDP-3-O-[(3R)-3-hydroxyacyl]-N-acetyl-alpha-D-glucosamine + H2O = a UDP-3-O-[(3R)-3-hydroxyacyl]-alpha-D-glucosamine + acetate. It participates in glycolipid biosynthesis; lipid IV(A) biosynthesis; lipid IV(A) from (3R)-3-hydroxytetradecanoyl-[acyl-carrier-protein] and UDP-N-acetyl-alpha-D-glucosamine: step 2/6. Its function is as follows. Catalyzes the hydrolysis of UDP-3-O-myristoyl-N-acetylglucosamine to form UDP-3-O-myristoylglucosamine and acetate, the committed step in lipid A biosynthesis. This is UDP-3-O-acyl-N-acetylglucosamine deacetylase from Burkholderia mallei (strain NCTC 10247).